The chain runs to 393 residues: NAD(P)H-quinone oxidoreductase subunit H, chloroplastic (393 aa).

This sequence belongs to the complex I 49 kDa subunit family. In terms of assembly, NDH is composed of at least 16 different subunits, 5 of which are encoded in the nucleus.

The protein resides in the plastid. It is found in the chloroplast thylakoid membrane. It carries out the reaction a plastoquinone + NADH + (n+1) H(+)(in) = a plastoquinol + NAD(+) + n H(+)(out). It catalyses the reaction a plastoquinone + NADPH + (n+1) H(+)(in) = a plastoquinol + NADP(+) + n H(+)(out). In terms of biological role, NDH shuttles electrons from NAD(P)H:plastoquinone, via FMN and iron-sulfur (Fe-S) centers, to quinones in the photosynthetic chain and possibly in a chloroplast respiratory chain. The immediate electron acceptor for the enzyme in this species is believed to be plastoquinone. Couples the redox reaction to proton translocation, and thus conserves the redox energy in a proton gradient. The sequence is that of NAD(P)H-quinone oxidoreductase subunit H, chloroplastic from Zygnema circumcarinatum (Green alga).